Reading from the N-terminus, the 1260-residue chain is Kinesin-like protein KIN-14E (1260 aa).

A MyTH4 domain is found at 115-274 (FQKDPIPTSL…PGREEIEALL (160 aa)). The region spanning 279-593 (LTTIVFFLDE…HINDVMLRRY (315 aa)) is the FERM domain. Coiled coils occupy residues 615–676 (QNFE…LLEV) and 753–853 (SKRL…TAAI). One can recognise a Kinesin motor domain in the interval 888 to 1209 (KIRVYCRIRP…LLYASRVRTI (322 aa)). Position 972–977 (972–977 (GSGKTF)) interacts with ATP. The segment at 1217 to 1239 (ISSKEMVRLKKLVAYWKEQAGKK) is calmodulin-binding. The interval 1221 to 1260 (EMVRLKKLVAYWKEQAGKKGEEEDLVDIEEDRTRKDEADS) is homodimerization domain. The tract at residues 1236–1260 (AGKKGEEEDLVDIEEDRTRKDEADS) is disordered. A compositionally biased stretch (basic and acidic residues) spans 1251–1260 (DRTRKDEADS).

Belongs to the TRAFAC class myosin-kinesin ATPase superfamily. Kinesin family. KIN-14 subfamily. As to quaternary structure, homodimer (via C-terminus). Binds microtubules via its N-terminus containing the MyTH4 domain and binds F-actin via its FERM domain. Interacts with KIPK1. Interacts with KIPK2. Interacts with AN. Interacts with AIR9. Interacts (via C-terminus) with KIC, CAM2, CAM4 and CAM6. KIC and calmodulin show competitive binding to KCBP. Binding to calmodulin inhibits microtubule binding activity. Binding to KIC inhibits microtubule binding activity and microtubule-stimulated ATPase activity. As to expression, widely expressed with the highest levels in flowers. Strongly expressed in the root tip. Highly detected in the branch apex of the trichome.

The protein resides in the cytoplasm. The protein localises to the cell cortex. It localises to the cytoskeleton. It is found in the spindle. Its subcellular location is the phragmoplast. Functionally, minus-end microtubule-dependent motor protein involved in the regulation of cell division and trichome morphogenesis through microtubules bundling. Possesses basal and microtubule-stimulated ATPase activities. Acts as a hub that brings together microtubules and actin filaments to modulate the cytoskeleton during trichome formation and morphogenesis. Could be involved in the negative regulation of root growth. In Arabidopsis thaliana (Mouse-ear cress), this protein is Kinesin-like protein KIN-14E.